We begin with the raw amino-acid sequence, 143 residues long: MAKKIIGFIKLQVPAGKANPSPPIGPALGQRGLNIMEFCKAFNAQTQGVEPGMPIPVVITAFADKSFTFVMKTPPATYLIKKAASITKGSAKANTDKVGKITRAQAEEIATTKRPDLTAADMDAAVRTIAGSARSMGITVEGL.

The protein belongs to the universal ribosomal protein uL11 family. Part of the ribosomal stalk of the 50S ribosomal subunit. Interacts with L10 and the large rRNA to form the base of the stalk. L10 forms an elongated spine to which L12 dimers bind in a sequential fashion forming a multimeric L10(L12)X complex. In terms of processing, one or more lysine residues are methylated.

Functionally, forms part of the ribosomal stalk which helps the ribosome interact with GTP-bound translation factors. This chain is Large ribosomal subunit protein uL11, found in Herminiimonas arsenicoxydans.